Consider the following 344-residue polypeptide: Ras association domain-containing protein 1 (344 aa).

Ser-2 bears the N-acetylserine mark. Phosphoserine is present on Ser-2. The tract at residues 2–119 (SGEPELIELR…DLGWEPAVER (118 aa)) is mediates interaction with E4F1. Arg-36 carries the post-translational modification Omega-N-methylarginine. The Phorbol-ester/DAG-type zinc-finger motif lies at 51 to 105 (GHRFQPAGPATHTWCDLCGDFIWGVVRKGLQCARLSADCKFTCHYRCRALVCLDC). Over residues 179–189 (SVPSSKKPPSL) the composition is skewed to low complexity. The segment at 179-203 (SVPSSKKPPSLQDARRGPGRGTSVR) is disordered. One can recognise a Ras-associating domain in the interval 198–292 (RGTSVRRRTS…LSFVLKENDS (95 aa)). Residues 294 to 341 (EVNWDAFSMPELHNFLRILQREEEEHLRQILQKYSYCRQKIQEALHAC) form the SARAH domain. The MOAP1-binding stretch occupies residues 315–318 (EEEE).

As to quaternary structure, interacts with MAP1S. Interacts with XPA. Binds to the N-terminal of CDC20 during prometaphase. Binds to STK3/MST2 and STK4/MST1. Recruited to the TNFRSF1A and TNFRSF10A complexes in response to their respective cognate ligand, after internalization. Can self-associate. Part of a complex with MDM2, DAXX, RASSF1 and USP7. Interacts with ECM2. In terms of assembly, interacts with MOAP1. Interacts with E4F1. Interacts with RSSF5 and probably associates with HRAS via a RSSF1 isoform A-RSSF5 heterodimer. Interacts (via C-terminus) with DAXX (via N-terminus); the interaction is independent of MDM2 and TP53. Interacts (via N-terminus) with MDM2 (via C-terminus); the interaction is independent of TP53. Interacts with RAB39A. Interacts with RAB39B; the interaction is weak. Interacts (via N-terminus) with DAXX. Interacts with RAB39B; the interaction is strong. Does not interact with RAB39A. As to quaternary structure, interacts (via N-terminus) with DAXX. As to expression, isoform A and isoform C are ubiquitously expressed in all tissues tested, however isoform A is absent in many corresponding cancer cell lines. Isoform B is mainly expressed in hematopoietic cells.

The protein resides in the cytoplasm. Its subcellular location is the cytoskeleton. The protein localises to the microtubule organizing center. It is found in the centrosome. It localises to the spindle. The protein resides in the spindle pole. Its subcellular location is the nucleus. Its function is as follows. Potential tumor suppressor. Required for death receptor-dependent apoptosis. Mediates activation of STK3/MST2 and STK4/MST1 during Fas-induced apoptosis by preventing their dephosphorylation. When associated with MOAP1, promotes BAX conformational change and translocation to mitochondrial membranes in response to TNF and TNFSF10 stimulation. Isoform A interacts with CDC20, an activator of the anaphase-promoting complex, APC, resulting in the inhibition of APC activity and mitotic progression. Inhibits proliferation by negatively regulating cell cycle progression at the level of G1/S-phase transition by regulating accumulation of cyclin D1 protein. Isoform C has been shown not to perform these roles, no function has been identified for this isoform. Isoform A disrupts interactions among MDM2, DAXX and USP7, thus contributing to the efficient activation of TP53 by promoting MDM2 self-ubiquitination in cell-cycle checkpoint control in response to DNA damage. The sequence is that of Ras association domain-containing protein 1 from Homo sapiens (Human).